A 506-amino-acid polypeptide reads, in one-letter code: Maturase K (506 aa).

The protein belongs to the intron maturase 2 family. MatK subfamily.

It is found in the plastid. Its subcellular location is the chloroplast. Usually encoded in the trnK tRNA gene intron. Probably assists in splicing its own and other chloroplast group II introns. This chain is Maturase K, found in Trifolium gracilentum (Pinpoint clover).